A 192-amino-acid polypeptide reads, in one-letter code: MVSMFWLLATFAYLLGSLSFAILLSRLSGRPDPRASGSGNAGATNMLRLAGKKLAILTLLGDLCKGLLPILIASAWNLNIAQQGWIGVCAVLGHLFPVYFRFRGGKGVATAAGVLLGLYPPAAALAIAAWLLTLYLTRTSSLAALIATPLTLPLLAWQEPHALLPMSVLTLLIVWRHRGNLRDLLAGRERHF.

5 helical membrane-spanning segments follow: residues M4 to L24, L54 to S74, I80 to F100, A112 to L132, and L154 to V174.

Belongs to the PlsY family. Probably interacts with PlsX.

Its subcellular location is the cell inner membrane. It carries out the reaction an acyl phosphate + sn-glycerol 3-phosphate = a 1-acyl-sn-glycero-3-phosphate + phosphate. Its pathway is lipid metabolism; phospholipid metabolism. Catalyzes the transfer of an acyl group from acyl-phosphate (acyl-PO(4)) to glycerol-3-phosphate (G3P) to form lysophosphatidic acid (LPA). This enzyme utilizes acyl-phosphate as fatty acyl donor, but not acyl-CoA or acyl-ACP. The chain is Glycerol-3-phosphate acyltransferase from Pseudomonas savastanoi pv. phaseolicola (strain 1448A / Race 6) (Pseudomonas syringae pv. phaseolicola (strain 1448A / Race 6)).